The primary structure comprises 314 residues: Lipoyl synthase (314 aa).

The [4Fe-4S] cluster site is built by cysteine 55, cysteine 60, cysteine 66, cysteine 81, cysteine 85, cysteine 88, and serine 292. The region spanning 67-281 (WEDREATFLI…TQYAEGLGFS (215 aa)) is the Radical SAM core domain.

This sequence belongs to the radical SAM superfamily. Lipoyl synthase family. [4Fe-4S] cluster serves as cofactor.

It is found in the cytoplasm. The enzyme catalyses [[Fe-S] cluster scaffold protein carrying a second [4Fe-4S](2+) cluster] + N(6)-octanoyl-L-lysyl-[protein] + 2 oxidized [2Fe-2S]-[ferredoxin] + 2 S-adenosyl-L-methionine + 4 H(+) = [[Fe-S] cluster scaffold protein] + N(6)-[(R)-dihydrolipoyl]-L-lysyl-[protein] + 4 Fe(3+) + 2 hydrogen sulfide + 2 5'-deoxyadenosine + 2 L-methionine + 2 reduced [2Fe-2S]-[ferredoxin]. It participates in protein modification; protein lipoylation via endogenous pathway; protein N(6)-(lipoyl)lysine from octanoyl-[acyl-carrier-protein]: step 2/2. Catalyzes the radical-mediated insertion of two sulfur atoms into the C-6 and C-8 positions of the octanoyl moiety bound to the lipoyl domains of lipoate-dependent enzymes, thereby converting the octanoylated domains into lipoylated derivatives. In Mycobacterium leprae (strain Br4923), this protein is Lipoyl synthase.